A 264-amino-acid polypeptide reads, in one-letter code: Acetylglutamate kinase (264 aa).

Residues 40-41 (GG), Arg-62, and Asn-158 contribute to the substrate site.

This sequence belongs to the acetylglutamate kinase family. ArgB subfamily.

It is found in the cytoplasm. It catalyses the reaction N-acetyl-L-glutamate + ATP = N-acetyl-L-glutamyl 5-phosphate + ADP. The protein operates within amino-acid biosynthesis; L-arginine biosynthesis; N(2)-acetyl-L-ornithine from L-glutamate: step 2/4. Catalyzes the ATP-dependent phosphorylation of N-acetyl-L-glutamate. The protein is Acetylglutamate kinase of Cytophaga hutchinsonii (strain ATCC 33406 / DSM 1761 / CIP 103989 / NBRC 15051 / NCIMB 9469 / D465).